Consider the following 273-residue polypeptide: Formamidopyrimidine-DNA glycosylase (273 aa).

The Schiff-base intermediate with DNA role is filled by P2. Residue E3 is the Proton donor of the active site. The active-site Proton donor; for beta-elimination activity is the K57. DNA-binding residues include H91, R110, and K151. The segment at 236–270 (QVYGRKDEACNDCGTIIEAKVIGQRNSYFCPHCQM) adopts an FPG-type zinc-finger fold. R260 serves as the catalytic Proton donor; for delta-elimination activity.

This sequence belongs to the FPG family. Monomer. Zn(2+) is required as a cofactor.

It catalyses the reaction Hydrolysis of DNA containing ring-opened 7-methylguanine residues, releasing 2,6-diamino-4-hydroxy-5-(N-methyl)formamidopyrimidine.. The enzyme catalyses 2'-deoxyribonucleotide-(2'-deoxyribose 5'-phosphate)-2'-deoxyribonucleotide-DNA = a 3'-end 2'-deoxyribonucleotide-(2,3-dehydro-2,3-deoxyribose 5'-phosphate)-DNA + a 5'-end 5'-phospho-2'-deoxyribonucleoside-DNA + H(+). Involved in base excision repair of DNA damaged by oxidation or by mutagenic agents. Acts as a DNA glycosylase that recognizes and removes damaged bases. Has a preference for oxidized purines, such as 7,8-dihydro-8-oxoguanine (8-oxoG). Has AP (apurinic/apyrimidinic) lyase activity and introduces nicks in the DNA strand. Cleaves the DNA backbone by beta-delta elimination to generate a single-strand break at the site of the removed base with both 3'- and 5'-phosphates. The polypeptide is Formamidopyrimidine-DNA glycosylase (Actinobacillus pleuropneumoniae serotype 5b (strain L20)).